A 168-amino-acid chain; its full sequence is Protein C2-DOMAIN ABA-RELATED 3 (168 aa).

Positions 1 to 106 constitute a C2 domain; it reads MSLMDNLLGI…IEALRMELSG (106 aa). Arg-24, Asp-25, Asp-30, Asp-76, His-77, Asp-78, and Asp-84 together coordinate Ca(2+).

The protein belongs to the plant CAR protein family. As to quaternary structure, binds to PYR/PYL/RCAR abscisic acid intracellular receptors in an ABA-independent manner, both at the plasma membrane and in the nucleus. Ca(2+) is required as a cofactor.

Its subcellular location is the cell membrane. It localises to the nucleus. Functionally, stimulates the GTPase/ATPase activities of Obg-like ATPases. Mediates the transient calcium-dependent interaction of PYR/PYL/RCAR abscisic acid (ABA) receptors with the plasma membrane and thus regulates ABA sensitivity. The protein is Protein C2-DOMAIN ABA-RELATED 3 of Arabidopsis thaliana (Mouse-ear cress).